The sequence spans 531 residues: Coiled-coil domain-containing protein 9 (531 aa).

Residues 40–531 form a disordered region; that stretch reads EDRKKAELEG…PGEAWPFESV (492 aa). Residues 59–72 show a composition bias toward basic and acidic residues; it reads RSVEKENVAVESEK. Position 80 is a phosphoserine (Ser80). Thr95 is subject to Phosphothreonine. Arg107 is modified (omega-N-methylarginine). Position 111 is a phosphoserine (Ser111). Omega-N-methylarginine occurs at positions 121, 128, and 130. 3 positions are modified to asymmetric dimethylarginine: Arg131, Arg133, and Arg135. Phosphoserine is present on Ser137. 3 stretches are compositionally biased toward basic and acidic residues: residues 148-185, 194-217, and 227-241; these read ISDRKSKEWEERRRQNIEKMNEEMEKIAEYERNQREGV, FLDDPRRRSGPLEESERDRREESR, and DFERVRCGLEHERQG. The stretch at 149–185 forms a coiled coil; sequence SDRKSKEWEERRRQNIEKMNEEMEKIAEYERNQREGV. The residue at position 202 (Ser202) is a Phosphoserine. Phosphoserine occurs at positions 248 and 255. Composition is skewed to basic and acidic residues over residues 258-279, 289-302, 311-320, and 361-372; these read GRERSEYLRWKQEREKIDQERL, WRREWDAEKTDGMF, EPSHRYDDQA, and YSDHDDRWETKE. Ser376, Ser386, and Ser390 each carry phosphoserine. Residues 386–395 show a composition bias toward low complexity; sequence SPETSPKETP. A compositionally biased stretch (pro residues) spans 396 to 406; it reads MQPPEIPAPAH. Acidic residues predominate over residues 411–446; sequence DEGEENEGEEDEEWEDISEDEEEEEIEVEEGDEEEP. Phosphoserine is present on Ser521.

In terms of assembly, probable component of the exon junction complex (EJC); the association is RNA-dependent.

Probable component of the exon junction complex (EJC), a multiprotein complex that associates immediately upstream of the exon-exon junction on mRNAs and serves as a positional landmark for the intron exon structure of genes and directs post-transcriptional processes in the cytoplasm such as mRNA export, nonsense-mediated mRNA decay (NMD) or translation. The sequence is that of Coiled-coil domain-containing protein 9 from Homo sapiens (Human).